A 221-amino-acid chain; its full sequence is Thiamine-phosphate synthase (221 aa).

4-amino-2-methyl-5-(diphosphooxymethyl)pyrimidine-binding positions include 46-50 (QFREK) and Asn-82. Residues Asp-83 and Asp-102 each contribute to the Mg(2+) site. Ser-121 lines the 4-amino-2-methyl-5-(diphosphooxymethyl)pyrimidine pocket. Residue 148 to 150 (TQS) coordinates 2-[(2R,5Z)-2-carboxy-4-methylthiazol-5(2H)-ylidene]ethyl phosphate. 4-amino-2-methyl-5-(diphosphooxymethyl)pyrimidine is bound at residue Lys-151. Residues Gly-180 and 200 to 201 (IS) contribute to the 2-[(2R,5Z)-2-carboxy-4-methylthiazol-5(2H)-ylidene]ethyl phosphate site.

It belongs to the thiamine-phosphate synthase family. It depends on Mg(2+) as a cofactor.

The catalysed reaction is 2-[(2R,5Z)-2-carboxy-4-methylthiazol-5(2H)-ylidene]ethyl phosphate + 4-amino-2-methyl-5-(diphosphooxymethyl)pyrimidine + 2 H(+) = thiamine phosphate + CO2 + diphosphate. It catalyses the reaction 2-(2-carboxy-4-methylthiazol-5-yl)ethyl phosphate + 4-amino-2-methyl-5-(diphosphooxymethyl)pyrimidine + 2 H(+) = thiamine phosphate + CO2 + diphosphate. The enzyme catalyses 4-methyl-5-(2-phosphooxyethyl)-thiazole + 4-amino-2-methyl-5-(diphosphooxymethyl)pyrimidine + H(+) = thiamine phosphate + diphosphate. It participates in cofactor biosynthesis; thiamine diphosphate biosynthesis; thiamine phosphate from 4-amino-2-methyl-5-diphosphomethylpyrimidine and 4-methyl-5-(2-phosphoethyl)-thiazole: step 1/1. In terms of biological role, condenses 4-methyl-5-(beta-hydroxyethyl)thiazole monophosphate (THZ-P) and 2-methyl-4-amino-5-hydroxymethyl pyrimidine pyrophosphate (HMP-PP) to form thiamine monophosphate (TMP). This Pasteurella multocida (strain Pm70) protein is Thiamine-phosphate synthase.